Reading from the N-terminus, the 132-residue chain is ATP synthase epsilon chain (132 aa).

Basic and acidic residues predominate over residues 88 to 102; that stretch reads IDKERAEAARQRAQE. The disordered stretch occupies residues 88–112; sequence IDKERAEAARQRAQERLNSQSDDTD.

This sequence belongs to the ATPase epsilon chain family. F-type ATPases have 2 components, CF(1) - the catalytic core - and CF(0) - the membrane proton channel. CF(1) has five subunits: alpha(3), beta(3), gamma(1), delta(1), epsilon(1). CF(0) has three main subunits: a, b and c. The F(1)F(0) complex interacts with SpoIIIJ and YqjG; YqgA is found in the same complex.

The protein localises to the cell membrane. Functionally, produces ATP from ADP in the presence of a proton gradient across the membrane. The protein is ATP synthase epsilon chain (atpC) of Bacillus subtilis (strain 168).